Consider the following 354-residue polypeptide: MSLFDTINSGGAQLLGVAWPTVWALVRILVVAVVILLCVAYLILWERKLIGWMHVRLGPNRVGPAGLLQPIADVLKLLLKEVIRPTAASRWLYLVAPVMTVVPAFAVWAVIPFQAGAVLANINAGLLYAMAISSIGVYAVILAGWASNSKYAFLGAMRAAAQMVSYEISMGFALVLVLMTAGSLNLSEIVGSQQHGFFAGHGVNFLSWNWLPLLPVFVIYFISGIAETNRHPFDVVEGESEIVAGHMIDYSGMAFALFFLAEYINMIVISALAATLFLGGWDAPFEFLSFIPGIFWLVLKIFALLSVFIWARATFPRYRYDQIMRLGWKVFLPVCVFWVIVVGFWMMSPLNIWK.

A run of 8 helical transmembrane segments spans residues 25–45 (LVRILVVAVVILLCVAYLILW), 91–111 (WLYLVAPVMTVVPAFAVWAVI), 126–146 (LLYAMAISSIGVYAVILAGWA), 170–190 (MGFALVLVLMTAGSLNLSEIV), 205–225 (FLSWNWLPLLPVFVIYFISGI), 253–273 (MAFALFFLAEYINMIVISALA), 290–310 (FIPGIFWLVLKIFALLSVFIW), and 330–350 (VFLPVCVFWVIVVGFWMMSPL).

It belongs to the complex I subunit 1 family. NDH-1 is composed of 14 different subunits. Subunits NuoA, H, J, K, L, M, N constitute the membrane sector of the complex.

Its subcellular location is the cell inner membrane. It carries out the reaction a quinone + NADH + 5 H(+)(in) = a quinol + NAD(+) + 4 H(+)(out). Functionally, NDH-1 shuttles electrons from NADH, via FMN and iron-sulfur (Fe-S) centers, to quinones in the respiratory chain. The immediate electron acceptor for the enzyme in this species is believed to be ubiquinone. Couples the redox reaction to proton translocation (for every two electrons transferred, four hydrogen ions are translocated across the cytoplasmic membrane), and thus conserves the redox energy in a proton gradient. This subunit may bind ubiquinone. The chain is NADH-quinone oxidoreductase subunit H from Burkholderia mallei (strain ATCC 23344).